A 201-amino-acid chain; its full sequence is Cysteine dioxygenase type 1 (201 aa).

Fe cation contacts are provided by histidine 86, histidine 88, and histidine 141. Residues cysteine 93 to tyrosine 158 constitute a cross-link (3'-(S-cysteinyl)-tyrosine (Cys-Tyr)).

It belongs to the cysteine dioxygenase family. As to quaternary structure, monomer. Fe cation serves as cofactor. Requires Ni(2+) as cofactor. The cofactor is Zn(2+). In terms of processing, the thioether cross-link between Cys-93 and Tyr-158 plays a structural role through stabilizing the Fe(2+) ion, and prevents the production of highly damaging free hydroxyl radicals by holding the oxygen radical via hydroxyl hydrogen.

It catalyses the reaction L-cysteine + O2 = 3-sulfino-L-alanine + H(+). Its pathway is organosulfur biosynthesis; taurine biosynthesis; hypotaurine from L-cysteine: step 1/2. Catalyzes the oxidation of cysteine to cysteine sulfinic acid with addition of molecular dioxygen. The chain is Cysteine dioxygenase type 1 (cdo1) from Danio rerio (Zebrafish).